The chain runs to 229 residues: 7-cyano-7-deazaguanine synthase (229 aa).

15–25 (LSGGLDSATVV) provides a ligand contact to ATP. Zn(2+) is bound by residues C194, C204, C207, and C210.

This sequence belongs to the QueC family. Zn(2+) serves as cofactor.

The catalysed reaction is 7-carboxy-7-deazaguanine + NH4(+) + ATP = 7-cyano-7-deazaguanine + ADP + phosphate + H2O + H(+). It functions in the pathway purine metabolism; 7-cyano-7-deazaguanine biosynthesis. Catalyzes the ATP-dependent conversion of 7-carboxy-7-deazaguanine (CDG) to 7-cyano-7-deazaguanine (preQ(0)). In Pseudomonas savastanoi pv. phaseolicola (strain 1448A / Race 6) (Pseudomonas syringae pv. phaseolicola (strain 1448A / Race 6)), this protein is 7-cyano-7-deazaguanine synthase.